The primary structure comprises 910 residues: Epithelial discoidin domain-containing receptor 1 (910 aa).

The first 19 residues, 1 to 19 (MGTGTLSSLLLLLLLVTIG), serve as a signal peptide directing secretion. Topologically, residues 22–414 (DMKGHFDPAK…VAKAEGSPTA (393 aa)) are extracellular. The F5/8 type C domain occupies 32–186 (CRYALGMQDR…VCLRVELYGC (155 aa)). Intrachain disulfides connect C32–C186 and C75–C178. The segment at 193–368 (LSYTAPVGQT…LFSEISFISD (176 aa)) is DS-like domain. The Ca(2+) site is built by N212, Q231, D234, V236, Y254, and Y256. Residue N212 is glycosylated (N-linked (GlcNAc...) asparagine). N261 carries N-linked (GlcNAc...) asparagine glycosylation. C304 and C349 form a disulfide bridge. 2 residues coordinate Ca(2+): S361 and E362. 2 N-linked (GlcNAc...) asparagine glycosylation sites follow: N371 and N391. The helical transmembrane segment at 415–435 (ILIGCLVAIILLLLLIIALML) threads the bilayer. The Cytoplasmic portion of the chain corresponds to 436–910 (WRLHWRRLLS…FLADDALNTV (475 aa)). Residues 467-494 (ILINNRPGPREPPPYQEPRPRGTPTHSA) are disordered. A PPxY motif motif is present at residues 478–481 (PPPY). A phosphotyrosine; by autocatalysis mark is found at Y481, Y510, and Y517. In terms of domain architecture, Protein kinase spans 607-902 (LRFKEKLGEG…PPFSQLHRFL (296 aa)). ATP contacts are provided by residues 613–621 (LGEGQFGEV) and K652. At Y737 the chain carries Phosphotyrosine; by autocatalysis. D763 (proton acceptor) is an active-site residue. Phosphotyrosine; by autocatalysis occurs at positions 789, 793, and 794.

Belongs to the protein kinase superfamily. Tyr protein kinase family. Insulin receptor subfamily. In terms of assembly, homodimer. Interacts (via PPxY motif) with WWC1 (via WW domains) in a collagen-regulated manner. Forms a tripartite complex with WWC1 and PRKCZ, but predominantly in the absence of collagen. Interacts (tyrosine phosphorylated) with SHC1. Interacts with SRC. Interacts with MYH9. Interacts with CDH1. Interacts with PTPN11. Interacts with NCK2. In terms of processing, autophosphorylated in response to fibrillar collagen binding. As to expression, various embryonic and adult tissues; also proliferative zones of the developing brain; hippocampal neurons.

It localises to the cell membrane. The enzyme catalyses L-tyrosyl-[protein] + ATP = O-phospho-L-tyrosyl-[protein] + ADP + H(+). Tyrosine kinase that functions as a cell surface receptor for fibrillar collagen and regulates cell attachment to the extracellular matrix, remodeling of the extracellular matrix, cell migration, differentiation, survival and cell proliferation. Collagen binding triggers a signaling pathway that involves SRC and leads to the activation of MAP kinases. Regulates remodeling of the extracellular matrix by up-regulation of the matrix metalloproteinases MMP2, MMP7 and MMP9, and thereby facilitates cell migration and wound healing. Promotes smooth muscle cell migration, and thereby contributes to arterial wound healing. Also plays a role in tumor cell invasion. Phosphorylates PTPN11. Required for normal blastocyst implantation during pregnancy, for normal mammary gland differentiation and normal lactation. Required for normal ear morphology and normal hearing. The chain is Epithelial discoidin domain-containing receptor 1 (Ddr1) from Rattus norvegicus (Rat).